The primary structure comprises 324 residues: Acetyl-coenzyme A carboxylase carboxyl transferase subunit alpha (324 aa).

The 255-residue stretch at Ile-37–Gln-291 folds into the CoA carboxyltransferase C-terminal domain.

It belongs to the AccA family. As to quaternary structure, acetyl-CoA carboxylase is a heterohexamer composed of biotin carboxyl carrier protein (AccB), biotin carboxylase (AccC) and two subunits each of ACCase subunit alpha (AccA) and ACCase subunit beta (AccD).

The protein localises to the cytoplasm. The enzyme catalyses N(6)-carboxybiotinyl-L-lysyl-[protein] + acetyl-CoA = N(6)-biotinyl-L-lysyl-[protein] + malonyl-CoA. It participates in lipid metabolism; malonyl-CoA biosynthesis; malonyl-CoA from acetyl-CoA: step 1/1. Component of the acetyl coenzyme A carboxylase (ACC) complex. First, biotin carboxylase catalyzes the carboxylation of biotin on its carrier protein (BCCP) and then the CO(2) group is transferred by the carboxyltransferase to acetyl-CoA to form malonyl-CoA. The chain is Acetyl-coenzyme A carboxylase carboxyl transferase subunit alpha from Bacillus cytotoxicus (strain DSM 22905 / CIP 110041 / 391-98 / NVH 391-98).